The following is a 384-amino-acid chain: MKFVDEVEIRVDAGDGGNGCISFRREKYIPKGGPDGGDGGDGGDVYLEADENLNTLIDYRFERFHKAERGKNGMGKNCTGRRGNDIVLPVPPGTRATDIDTGEVLGDLTKHGQRLMVAKGGFHGLGNTRFKSSINRAPRQKTDGTPGEVRPLKLELMLLADVGLLGMPNAGKSTFIRSVSAARPKVADYPFTTLIPNLGVVRPAPHQSFVIADIPGLIEGAAEGAGLGIQFLKHLERCRLLLHLVDLAPFDETDPAEQARIIINELEKYSPKLAEKPRWLVINKVDLLLDEEVQEKVDELVKSLNWDGPVFQIAALEGRGSDALCREVMSYLETLPAPDTEQHEEADPVEFMWDTYHEEVLEEEMDDEDDDDDDDHDVEVIYQK.

An Obg domain is found at 1–159 (MKFVDEVEIR…RPLKLELMLL (159 aa)). The interval 72–94 (NGMGKNCTGRRGNDIVLPVPPGT) is disordered. In terms of domain architecture, OBG-type G spans 160-333 (ADVGLLGMPN…LCREVMSYLE (174 aa)). Residues 166 to 173 (GMPNAGKS), 191 to 195 (FTTLI), 213 to 216 (DIPG), 283 to 286 (NKVD), and 314 to 316 (AAL) contribute to the GTP site. Mg(2+) contacts are provided by Ser173 and Thr193. The interval 358–384 (EEVLEEEMDDEDDDDDDDHDVEVIYQK) is disordered. Positions 360–377 (VLEEEMDDEDDDDDDDHD) are enriched in acidic residues.

Belongs to the TRAFAC class OBG-HflX-like GTPase superfamily. OBG GTPase family. In terms of assembly, monomer. The cofactor is Mg(2+).

It localises to the cytoplasm. An essential GTPase which binds GTP, GDP and possibly (p)ppGpp with moderate affinity, with high nucleotide exchange rates and a fairly low GTP hydrolysis rate. Plays a role in control of the cell cycle, stress response, ribosome biogenesis and in those bacteria that undergo differentiation, in morphogenesis control. In Idiomarina loihiensis (strain ATCC BAA-735 / DSM 15497 / L2-TR), this protein is GTPase Obg.